The sequence spans 383 residues: Lipid-A-disaccharide synthase (383 aa).

Belongs to the LpxB family.

It carries out the reaction a lipid X + a UDP-2-N,3-O-bis[(3R)-3-hydroxyacyl]-alpha-D-glucosamine = a lipid A disaccharide + UDP + H(+). The protein operates within bacterial outer membrane biogenesis; LPS lipid A biosynthesis. In terms of biological role, condensation of UDP-2,3-diacylglucosamine and 2,3-diacylglucosamine-1-phosphate to form lipid A disaccharide, a precursor of lipid A, a phosphorylated glycolipid that anchors the lipopolysaccharide to the outer membrane of the cell. This is Lipid-A-disaccharide synthase from Alcanivorax borkumensis (strain ATCC 700651 / DSM 11573 / NCIMB 13689 / SK2).